We begin with the raw amino-acid sequence, 304 residues long: Ornithine carbamoyltransferase (304 aa).

Carbamoyl phosphate is bound by residues 53–56 (STRT), glutamine 80, arginine 104, and 131–134 (HPCQ). Residues asparagine 162, aspartate 219, and 223–224 (SM) each bind L-ornithine. Carbamoyl phosphate contacts are provided by residues 259–260 (CL) and arginine 287.

This sequence belongs to the aspartate/ornithine carbamoyltransferase superfamily. OTCase family.

The protein resides in the cytoplasm. The catalysed reaction is carbamoyl phosphate + L-ornithine = L-citrulline + phosphate + H(+). The protein operates within amino-acid biosynthesis; L-arginine biosynthesis; L-arginine from L-ornithine and carbamoyl phosphate: step 1/3. Functionally, reversibly catalyzes the transfer of the carbamoyl group from carbamoyl phosphate (CP) to the N(epsilon) atom of ornithine (ORN) to produce L-citrulline. In Herminiimonas arsenicoxydans, this protein is Ornithine carbamoyltransferase.